We begin with the raw amino-acid sequence, 467 residues long: Glutamate--tRNA ligase (467 aa).

The 'HIGH' region motif lies at 9-19 (PSPTGYLHIGG). The short motif at 237–241 (KLSKR) is the 'KMSKS' region element. An ATP-binding site is contributed by Lys-240.

It belongs to the class-I aminoacyl-tRNA synthetase family. Glutamate--tRNA ligase type 1 subfamily. In terms of assembly, monomer.

Its subcellular location is the cytoplasm. The catalysed reaction is tRNA(Glu) + L-glutamate + ATP = L-glutamyl-tRNA(Glu) + AMP + diphosphate. Its function is as follows. Catalyzes the attachment of glutamate to tRNA(Glu) in a two-step reaction: glutamate is first activated by ATP to form Glu-AMP and then transferred to the acceptor end of tRNA(Glu). The polypeptide is Glutamate--tRNA ligase (Xanthomonas euvesicatoria pv. vesicatoria (strain 85-10) (Xanthomonas campestris pv. vesicatoria)).